The primary structure comprises 188 residues: uncharacterized protein (188 aa).

The segment at 121-142 (ADTLSRKNKRSSDQKRNGQHFE) is disordered. Residues 130-142 (RSSDQKRNGQHFE) are compositionally biased toward basic and acidic residues.

Belongs to the chlamydial CPn_0422/CT_273/TC_0545 family.

This is an uncharacterized protein from Chlamydia trachomatis serovar D (strain ATCC VR-885 / DSM 19411 / UW-3/Cx).